We begin with the raw amino-acid sequence, 293 residues long: MALSLSLFLGGRVRAAVARCGFASQGVAGPGSISREPDPDSDWEPEERELQEVESALKRQKKAMRFQKIRRQMEAPGAPPRTLTWEAMEQIRYLHKEFAESWSVPRLAEGFDVSTDVIRRVLKSKFIPTLEQKLKQDQKVLKKAGITRVVWQLPVSEDTLKPLSAGHPMSGPLLMPGDEVSSNSQTHSRALKVKSNAPSAEAQKKREEKNKRIRVLAESLVPTTTALGHQRELQKYTTHDSEADRRANNHILPSVEKLEELEAGEPGDQNFSSKVVQKGREFFDSNGNFLYRI.

An N-terminal signal peptide occupies residues 1–15; sequence MALSLSLFLGGRVRA. 2 disordered regions span residues 25–48 and 162–211; these read QGVA…PEER and PLSA…EKNK. Position 41 is a phosphoserine (serine 41). Asparagine 270 carries an N-linked (GlcNAc...) asparagine glycan.

The protein belongs to the neugrin family. In terms of assembly, forms a regulatory protein-RNA complex, consisting of RCC1L, NGRN, RPUSD3, RPUSD4, TRUB2, FASTKD2 and 16S mt-rRNA. Interacts with 16S mt-rRNA; this interaction is direct.

The protein resides in the nucleus. It localises to the secreted. Its subcellular location is the mitochondrion membrane. Plays an essential role in mitochondrial ribosome biogenesis. As a component of a functional protein-RNA module, consisting of RCC1L, NGRN, RPUSD3, RPUSD4, TRUB2, FASTKD2 and 16S mitochondrial ribosomal RNA (16S mt-rRNA), controls 16S mt-rRNA abundance and is required for intra-mitochondrial translation of core subunits of the oxidative phosphorylation system. In Rattus norvegicus (Rat), this protein is Neugrin (Ngrn).